The following is a 466-amino-acid chain: Glutamate--tRNA ligase (466 aa).

The short motif at 10–20 (PSPTGYLHVGG) is the 'HIGH' region element. Residues Cys-99, Cys-101, Cys-126, and Asp-128 each contribute to the Zn(2+) site. The 'KMSKS' region signature appears at 237-241 (RLSKR). Lys-240 serves as a coordination point for ATP.

Belongs to the class-I aminoacyl-tRNA synthetase family. Glutamate--tRNA ligase type 1 subfamily. As to quaternary structure, monomer. Zn(2+) serves as cofactor.

The protein resides in the cytoplasm. The enzyme catalyses tRNA(Glu) + L-glutamate + ATP = L-glutamyl-tRNA(Glu) + AMP + diphosphate. Its function is as follows. Catalyzes the attachment of glutamate to tRNA(Glu) in a two-step reaction: glutamate is first activated by ATP to form Glu-AMP and then transferred to the acceptor end of tRNA(Glu). The chain is Glutamate--tRNA ligase from Geobacter sulfurreducens (strain ATCC 51573 / DSM 12127 / PCA).